The primary structure comprises 188 residues: UPF0461 protein C5orf24 homolog (188 aa).

Ser37 is subject to Phosphoserine. A Glycyl lysine isopeptide (Lys-Gly) (interchain with G-Cter in SUMO2) cross-link involves residue Lys75. The disordered stretch occupies residues 79–142 (KKKKNLNRSG…GYKVSPGRPP (64 aa)). Residues 80–92 (KKKNLNRSGKRGR) are compositionally biased toward basic residues. The segment covering 94–107 (SGTTKSAGYRTSTG) has biased composition (polar residues). Phosphoserine occurs at positions 121 and 180. Lys184 is covalently cross-linked (Glycyl lysine isopeptide (Lys-Gly) (interchain with G-Cter in SUMO2)).

The protein belongs to the UPF0461 family.

This chain is UPF0461 protein C5orf24 homolog, found in Bos taurus (Bovine).